The following is a 338-amino-acid chain: Aspartate-semialdehyde dehydrogenase (338 aa).

NADP(+) is bound by residues 13 to 16 (SGAV) and 41 to 42 (RS). Phosphate is bound at residue R101. The active-site Acyl-thioester intermediate is C132. Position 159 (Q159) interacts with substrate. 162-163 (SG) contributes to the NADP(+) binding site. K216 lines the phosphate pocket. R238 contacts substrate. Residue H245 is the Proton acceptor of the active site. Residue N317 participates in NADP(+) binding.

It belongs to the aspartate-semialdehyde dehydrogenase family. As to quaternary structure, homodimer.

The catalysed reaction is L-aspartate 4-semialdehyde + phosphate + NADP(+) = 4-phospho-L-aspartate + NADPH + H(+). It participates in amino-acid biosynthesis; L-lysine biosynthesis via DAP pathway; (S)-tetrahydrodipicolinate from L-aspartate: step 2/4. The protein operates within amino-acid biosynthesis; L-methionine biosynthesis via de novo pathway; L-homoserine from L-aspartate: step 2/3. Its pathway is amino-acid biosynthesis; L-threonine biosynthesis; L-threonine from L-aspartate: step 2/5. Its function is as follows. Catalyzes the NADPH-dependent formation of L-aspartate-semialdehyde (L-ASA) by the reductive dephosphorylation of L-aspartyl-4-phosphate. This Shewanella violacea (strain JCM 10179 / CIP 106290 / LMG 19151 / DSS12) protein is Aspartate-semialdehyde dehydrogenase.